A 399-amino-acid chain; its full sequence is Succinate--CoA ligase [ADP-forming] subunit beta (399 aa).

Residues 9-254 enclose the ATP-grasp domain; sequence KQVLAKYGVP…EDEEDPMELE (246 aa). ATP contacts are provided by residues K46, 53–55, E109, C112, and E117; that span reads GRG. Positions 209 and 223 each coordinate Mg(2+). Substrate contacts are provided by residues N274 and 331-333; that span reads GIM.

Belongs to the succinate/malate CoA ligase beta subunit family. As to quaternary structure, heterotetramer of two alpha and two beta subunits. Mg(2+) serves as cofactor.

The catalysed reaction is succinate + ATP + CoA = succinyl-CoA + ADP + phosphate. The enzyme catalyses GTP + succinate + CoA = succinyl-CoA + GDP + phosphate. It functions in the pathway carbohydrate metabolism; tricarboxylic acid cycle; succinate from succinyl-CoA (ligase route): step 1/1. Its function is as follows. Succinyl-CoA synthetase functions in the citric acid cycle (TCA), coupling the hydrolysis of succinyl-CoA to the synthesis of either ATP or GTP and thus represents the only step of substrate-level phosphorylation in the TCA. The beta subunit provides nucleotide specificity of the enzyme and binds the substrate succinate, while the binding sites for coenzyme A and phosphate are found in the alpha subunit. This is Succinate--CoA ligase [ADP-forming] subunit beta from Rhodospirillum rubrum (strain ATCC 11170 / ATH 1.1.1 / DSM 467 / LMG 4362 / NCIMB 8255 / S1).